A 143-amino-acid polypeptide reads, in one-letter code: Large ribosomal subunit protein uL15 (143 aa).

Residues 1–54 (MQLNSIKPAPGAKHPKRRVGRGIGSGLGKTAGRGHKGQKSRAGGFHKVGFEGGQ) are disordered. Gly residues predominate over residues 21 to 31 (RGIGSGLGKTA).

It belongs to the universal ribosomal protein uL15 family. Part of the 50S ribosomal subunit.

Binds to the 23S rRNA. This chain is Large ribosomal subunit protein uL15, found in Nitrosospira multiformis (strain ATCC 25196 / NCIMB 11849 / C 71).